A 513-amino-acid polypeptide reads, in one-letter code: Probable WRKY transcription factor 3 (513 aa).

A compositionally biased stretch (basic and acidic residues) spans 1–11 (MAEKEEKEPSK). Disordered regions lie at residues 1–26 (MAEK…ISLP), 175–281 (NVHM…PACP), and 297–394 (IIYK…VASS). The span at 179–201 (QQSQQSEYPSSTQQQQQQQQQAS) shows a compositional bias: low complexity. The segment covering 202-228 (LTEIPSFSSAPRSQIRASVQETSQGQR) has biased composition (polar residues). Over residues 229–240 (ETSEISVFEHRS) the composition is skewed to basic and acidic residues. A DNA-binding region (WRKY 1) is located at residues 244–308 (NADKPADDGY…YKGQHNHELP (65 aa)). Polar residues-rich tracts occupy residues 311–335 (RGNN…SSLN) and 343–355 (TSQV…MSEA). Basic and acidic residues predominate over residues 368–387 (VGERHEDEPDPKRRNTEVRV). The segment at residues 409-474 (SEVDLLDDGY…YEGKHNHDVP (66 aa)) is a DNA-binding region (WRKY 2).

In young, mature and senescent leaves.

The protein localises to the nucleus. Functionally, transcription factor. Interacts specifically with the W box (5'-(T)TGAC[CT]-3'), a frequently occurring elicitor-responsive cis-acting element. The chain is Probable WRKY transcription factor 3 (WRKY3) from Arabidopsis thaliana (Mouse-ear cress).